The primary structure comprises 612 residues: Calcium-dependent protein kinase 27 (612 aa).

Gly-2 carries the N-myristoyl glycine lipid modification. Residues 23 to 132 (PRHAAPSSPS…AHIKRISSAG (110 aa)) are disordered. Positions 28–50 (PSSPSQPTTTSRSIPVVLPSAPS) are enriched in low complexity. The segment covering 51–100 (SKPPPPTQTAPPVPVVISEPPPPQPQPEPQPAAPSQPPPPQEQPSPPPPA) has biased composition (pro residues). Residues 117–127 (SRAKKPAHIKR) show a composition bias toward basic residues. The Protein kinase domain occupies 150-408 (YSLGRKLGQG…AHEVLCHPWL (259 aa)). ATP-binding positions include 156 to 164 (LGQGQFGTT) and Lys-179. Asp-274 (proton acceptor) is an active-site residue. The interval 414–444 (APDKPLDSAVLSRLRQFSAMNKLKKMALRVI) is autoinhibitory domain. 4 consecutive EF-hand domains span residues 451 to 486 (EEIAGLKEMFKMMDTDNSGQINYEELKAGLERVGAN), 487 to 522 (MKESEIYQLMQAADIDNSGTIDYGEFIAATLHLNKV), 523 to 558 (EREDHLYAAFQYFDKDGSGYITSDELQQACDEFGIE), and 561 to 592 (RLEDMIGEVDQDNDGRIDYNEFVAMMQKTTTG). Ca(2+) is bound by residues Asp-464, Asp-466, Ser-468, Gln-470, Glu-475, Asp-500, Asp-502, Ser-504, Thr-506, Glu-511, Asp-536, Asp-538, Ser-540, Tyr-542, Glu-547, Asp-570, Asp-572, Asp-574, Arg-576, and Glu-581.

Belongs to the protein kinase superfamily. Ser/Thr protein kinase family. CDPK subfamily.

It localises to the membrane. It carries out the reaction L-seryl-[protein] + ATP = O-phospho-L-seryl-[protein] + ADP + H(+). The catalysed reaction is L-threonyl-[protein] + ATP = O-phospho-L-threonyl-[protein] + ADP + H(+). Its activity is regulated as follows. Activated by calcium. Autophosphorylation may play an important role in the regulation of the kinase activity. Functionally, may play a role in signal transduction pathways that involve calcium as a second messenger. The polypeptide is Calcium-dependent protein kinase 27 (Oryza sativa subsp. japonica (Rice)).